A 216-amino-acid chain; its full sequence is Cytidylate kinase (216 aa).

An ATP-binding site is contributed by 7-15 (GPSGTGKST).

Belongs to the cytidylate kinase family. Type 1 subfamily.

Its subcellular location is the cytoplasm. It carries out the reaction CMP + ATP = CDP + ADP. The enzyme catalyses dCMP + ATP = dCDP + ADP. The sequence is that of Cytidylate kinase from Chlamydia trachomatis serovar D (strain ATCC VR-885 / DSM 19411 / UW-3/Cx).